A 57-amino-acid chain; its full sequence is Lantibiotic nisin-Z (57 aa).

The propeptide occupies 1–23 (MSTKDFNLDLVSVSKKDSGASPR). The residue at position 25 (Thr-25) is a 2,3-didehydrobutyrine. Positions 26–30 (SISLC) form a cross-link, lanthionine (Ser-Cys). Ser-28 carries the post-translational modification 2,3-didehydroalanine (Ser). 4 cross-links (beta-methyllanthionine (Thr-Cys)) span residues 31–34 (TPGC), 36–42 (TGALMGC), 46–49 (TATC), and 48–51 (TCNC). Residue Ser-56 is modified to 2,3-didehydroalanine (Ser).

Belongs to the type A lantibiotic family. In terms of processing, maturation of lantibiotics involves the enzymatic conversion of Thr, and Ser into dehydrated AA and the formation of thioether bonds with cysteine. This is followed by membrane translocation and cleavage of the modified precursor. Post-translationally, the structure of the 2,3-didehydrobutyrine is not discussed in PubMed:15361862. It is probably the Z-isomer by similarity.

Its function is as follows. Lanthionine-containing peptide antibiotic (lantibiotic) active on Gram-positive bacteria. The bactericidal activity of lantibiotics is based on depolarization of energized bacterial cytoplasmic membranes, initiated by the formation of aqueous transmembrane pores. The polypeptide is Lantibiotic nisin-Z (nisZ) (Lactococcus lactis subsp. lactis (Streptococcus lactis)).